A 547-amino-acid chain; its full sequence is Myrosinase 2 (547 aa).

The N-terminal stretch at 1 to 28 is a signal peptide; that stretch reads MQHNTYIYILTMKLLGFALAILLVVATC. 3 cysteine pairs are disulfide-bonded: cysteine 36/cysteine 460, cysteine 44/cysteine 456, and cysteine 236/cysteine 244. A beta-D-glucoside is bound by residues glutamine 69, histidine 171, and 216–217; that span reads NQ. N-linked (GlcNAc...) asparagine glycosylation occurs at asparagine 340. Tyrosine 359 is an a beta-D-glucoside binding site. Residue asparagine 384 is glycosylated (N-linked (GlcNAc...) asparagine). Residues glutamate 430, tryptophan 479, 486–487, and phenylalanine 495 contribute to the a beta-D-glucoside site; that span reads EF. Catalysis depends on glutamate 430, which acts as the Nucleophile. The N-linked (GlcNAc...) asparagine glycan is linked to asparagine 504.

It belongs to the glycosyl hydrolase 1 family. As to quaternary structure, interacts with MVP1. Expressed in phloem-associated cells.

The enzyme catalyses a thioglucoside + H2O = a sugar + a thiol.. In terms of biological role, may degrade glucosinolates (glucose residue linked by a thioglucoside bound to an amino acid derivative) to glucose, sulfate and any of the products: thiocyanates, isothiocyanates, nitriles, epithionitriles or oxazolidine-2-thiones. These toxic degradation products can deter insect herbivores. Seems to function in abscisic acid (ABA) and methyl jasmonate (MeJA) signaling in guard cells. Functionally redundant with TGG1. The protein is Myrosinase 2 of Arabidopsis thaliana (Mouse-ear cress).